We begin with the raw amino-acid sequence, 179 residues long: ATP-dependent protease subunit HslV (179 aa).

Thr7 is an active-site residue. The Na(+) site is built by Ala163, Cys166, and Thr169.

It belongs to the peptidase T1B family. HslV subfamily. In terms of assembly, a double ring-shaped homohexamer of HslV is capped on each side by a ring-shaped HslU homohexamer. The assembly of the HslU/HslV complex is dependent on binding of ATP.

The protein resides in the cytoplasm. The enzyme catalyses ATP-dependent cleavage of peptide bonds with broad specificity.. Allosterically activated by HslU binding. Functionally, protease subunit of a proteasome-like degradation complex believed to be a general protein degrading machinery. In Amoebophilus asiaticus (strain 5a2), this protein is ATP-dependent protease subunit HslV.